The chain runs to 183 residues: Threonylcarbamoyl-AMP synthase (183 aa).

Positions 1–183 (MNFTEIAEKL…LLTDQLIREG (183 aa)) constitute a YrdC-like domain.

It belongs to the SUA5 family. TsaC subfamily.

It is found in the cytoplasm. It carries out the reaction L-threonine + hydrogencarbonate + ATP = L-threonylcarbamoyladenylate + diphosphate + H2O. Functionally, required for the formation of a threonylcarbamoyl group on adenosine at position 37 (t(6)A37) in tRNAs that read codons beginning with adenine. Catalyzes the conversion of L-threonine, HCO(3)(-)/CO(2) and ATP to give threonylcarbamoyl-AMP (TC-AMP) as the acyladenylate intermediate, with the release of diphosphate. The polypeptide is Threonylcarbamoyl-AMP synthase (Actinobacillus succinogenes (strain ATCC 55618 / DSM 22257 / CCUG 43843 / 130Z)).